We begin with the raw amino-acid sequence, 447 residues long: ATP-dependent protease ATPase subunit HslU (447 aa).

Residues I17, 59–64 (GVGKTE), D256, E321, and R393 contribute to the ATP site.

Belongs to the ClpX chaperone family. HslU subfamily. In terms of assembly, a double ring-shaped homohexamer of HslV is capped on each side by a ring-shaped HslU homohexamer. The assembly of the HslU/HslV complex is dependent on binding of ATP.

The protein resides in the cytoplasm. Its function is as follows. ATPase subunit of a proteasome-like degradation complex; this subunit has chaperone activity. The binding of ATP and its subsequent hydrolysis by HslU are essential for unfolding of protein substrates subsequently hydrolyzed by HslV. HslU recognizes the N-terminal part of its protein substrates and unfolds these before they are guided to HslV for hydrolysis. The protein is ATP-dependent protease ATPase subunit HslU of Pseudomonas putida (strain ATCC 47054 / DSM 6125 / CFBP 8728 / NCIMB 11950 / KT2440).